The following is a 516-amino-acid chain: BAR/IMD domain-containing adapter protein 2-like 2 (516 aa).

The IMD domain occupies 1–227; the sequence is MSGVNSDLLH…PTPLDQEAQL (227 aa). The disordered stretch occupies residues 200-273; the sequence is ADGWKEKVSE…SSSVGESLGL (74 aa). Positions 201 to 212 are enriched in basic and acidic residues; that stretch reads DGWKEKVSESRS. Polar residues predominate over residues 226–236; that stretch reads QLKSSVGSLLQ. Over residues 238–247 the composition is skewed to basic and acidic residues; that stretch reads GDREMDREPL. Positions 249-270 are enriched in low complexity; that stretch reads RVPSRAPSPLPSRSRSSSVGES. In terms of domain architecture, SH3 spans 274–337; sequence GGGRSMRAIV…PAAYVASTED (64 aa). Residues 355-376 are compositionally biased toward polar residues; the sequence is LLEPTSQSESDTQTYSEVSSPV. Positions 355-516 are disordered; the sequence is LLEPTSQSES…TNDRSAPRIQ (162 aa). Basic and acidic residues predominate over residues 434 to 450; sequence PDRRAESHFESKVELKN. Residues 454–465 show a composition bias toward pro residues; sequence LPPPAPPLPNSP.

It is found in the cell membrane. Phosphoinositides-binding protein that induces the formation of planar or gently curved membrane structures. The sequence is that of BAR/IMD domain-containing adapter protein 2-like 2 (baiap2l2) from Danio rerio (Zebrafish).